The primary structure comprises 399 residues: Nicotinate phosphoribosyltransferase (399 aa).

Position 217 is a phosphohistidine; by autocatalysis (His-217).

Belongs to the NAPRTase family. Post-translationally, transiently phosphorylated on a His residue during the reaction cycle. Phosphorylation strongly increases the affinity for substrates and increases the rate of nicotinate D-ribonucleotide production. Dephosphorylation regenerates the low-affinity form of the enzyme, leading to product release.

It catalyses the reaction nicotinate + 5-phospho-alpha-D-ribose 1-diphosphate + ATP + H2O = nicotinate beta-D-ribonucleotide + ADP + phosphate + diphosphate. Its pathway is cofactor biosynthesis; NAD(+) biosynthesis; nicotinate D-ribonucleotide from nicotinate: step 1/1. Its function is as follows. Catalyzes the synthesis of beta-nicotinate D-ribonucleotide from nicotinate and 5-phospho-D-ribose 1-phosphate at the expense of ATP. This chain is Nicotinate phosphoribosyltransferase, found in Burkholderia orbicola (strain MC0-3).